Here is a 318-residue protein sequence, read N- to C-terminus: 2-oxoacid:ferredoxin oxidoreductase 1, subunit beta (318 aa).

3 residues coordinate [4Fe-4S] cluster: cysteine 18, cysteine 21, and cysteine 52. Residues 50–53 and histidine 69 each bind thiamine diphosphate; that span reads IGCS. Residue aspartate 94 participates in Mg(2+) binding. 95-96 contacts thiamine diphosphate; sequence GD. Residues asparagine 122 and valine 124 each coordinate Mg(2+). 126–127 contacts thiamine diphosphate; sequence GL. [4Fe-4S] cluster is bound at residue cysteine 201.

Heterodimer composed of an alpha and a beta subunit. [4Fe-4S] cluster is required as a cofactor. It depends on thiamine diphosphate as a cofactor. The cofactor is Mg(2+).

The enzyme catalyses a 2-oxocarboxylate + 2 oxidized [2Fe-2S]-[ferredoxin] + CoA = an acyl-CoA + 2 reduced [2Fe-2S]-[ferredoxin] + CO2 + H(+). Functionally, catalyzes the coenzyme A-dependent oxidative decarboxylation of different 2-oxoacids such as pyruvate, 2-oxobutyrate and glyoxylate to form their CoA derivatives. This is 2-oxoacid:ferredoxin oxidoreductase 1, subunit beta from Aeropyrum pernix (strain ATCC 700893 / DSM 11879 / JCM 9820 / NBRC 100138 / K1).